A 92-amino-acid polypeptide reads, in one-letter code: Small ribosomal subunit protein uS19 (92 aa).

The protein belongs to the universal ribosomal protein uS19 family.

Its function is as follows. Protein S19 forms a complex with S13 that binds strongly to the 16S ribosomal RNA. The polypeptide is Small ribosomal subunit protein uS19 (Bradyrhizobium sp. (strain BTAi1 / ATCC BAA-1182)).